Reading from the N-terminus, the 149-residue chain is UPF0260 protein PFLU_1520 (149 aa).

It belongs to the UPF0260 family.

In Pseudomonas fluorescens (strain SBW25), this protein is UPF0260 protein PFLU_1520.